Here is a 153-residue protein sequence, read N- to C-terminus: Hsp90 co-chaperone HCH1 (153 aa).

This sequence belongs to the AHA1 family. As to quaternary structure, monomer. Interacts with HSP82.

The protein localises to the cytoplasm. It is found in the nucleus. Functionally, co-chaperone that binds to the molecular chaperone HSP82 and stimulates its ATPase activity. Although not essential, it confers thermotolerance when intracellular levels of HSP82 are limiting. This Saccharomyces cerevisiae (strain ATCC 204508 / S288c) (Baker's yeast) protein is Hsp90 co-chaperone HCH1 (HCH1).